A 132-amino-acid chain; its full sequence is MFDGIGFMELLLIGILGLVVLGPERLPVAVRSITGWIRAMKRMANSVKDELEQELKIEQLHSDLKKAENQGLKDLSPELQDSIDQLKEAAQSVNRPYKIEETPSASSSAPSESTPSEAPTAEVSANPDKSNR.

Residues Phe2 to Gly22 form a helical membrane-spanning segment. Positions Glu68–Arg132 are disordered. A compositionally biased stretch (low complexity) spans Thr102–Glu122.

Belongs to the TatB family. In terms of assembly, the Tat system comprises two distinct complexes: a TatABC complex, containing multiple copies of TatA, TatB and TatC subunits, and a separate TatA complex, containing only TatA subunits. Substrates initially bind to the TatABC complex, which probably triggers association of the separate TatA complex to form the active translocon.

It is found in the cell inner membrane. Functionally, part of the twin-arginine translocation (Tat) system that transports large folded proteins containing a characteristic twin-arginine motif in their signal peptide across membranes. Together with TatC, TatB is part of a receptor directly interacting with Tat signal peptides. TatB may form an oligomeric binding site that transiently accommodates folded Tat precursor proteins before their translocation. This Shewanella woodyi (strain ATCC 51908 / MS32) protein is Sec-independent protein translocase protein TatB.